Reading from the N-terminus, the 145-residue chain is Holo-[acyl-carrier-protein] synthase (145 aa).

Mg(2+) is bound by residues Asp9 and Glu59.

The protein belongs to the P-Pant transferase superfamily. AcpS family. It depends on Mg(2+) as a cofactor.

The protein resides in the cytoplasm. The catalysed reaction is apo-[ACP] + CoA = holo-[ACP] + adenosine 3',5'-bisphosphate + H(+). Transfers the 4'-phosphopantetheine moiety from coenzyme A to a Ser of acyl-carrier-protein. The sequence is that of Holo-[acyl-carrier-protein] synthase from Nocardia farcinica (strain IFM 10152).